Consider the following 70-residue polypeptide: Melittin (70 aa).

The signal sequence occupies residues 1–21 (MKFLVNVALVFMVVYISFIYA). A propeptide spans 22–43 (APEPEPAPEAEAEADAEADPEA) (removed by a dipeptidylpeptidase). The residue at position 44 (glycine 44) is an N-formylglycine; partial. Glutamine 69 is modified (glutamine amide).

This sequence belongs to the melittin family. In terms of assembly, monomer (in solution and for integration into membranes), homotetramer (in solution and potentially as a toroidal pore in membranes), and potenially homomultimer (as a toroidal pore in membranes). As to expression, expressed by the venom gland.

Its subcellular location is the secreted. It is found in the target cell membrane. Main toxin of bee venom with strong hemolytic activity and antimicrobial activity. It has enhancing effects on bee venom phospholipase A2 activity. This amphipathic toxin binds to negatively charged membrane surface and forms pore by inserting into lipid bilayers inducing the leakage of ions and molecules and the enhancement of permeability that ultimately leads to cell lysis. It acts as a voltage-gated pore with higher selectivity for anions over cations. The ion conductance has been shown to be voltage-dependent. Self-association of melittin in membranes is promoted by high ionic strength, but not by the presence of negatively charged lipids. In vivo, intradermal injection into healthy human volunteers produce sharp pain sensation and an inflammatory response. It produces pain by activating primary nociceptor cells directly and indirectly due to its ability to activate plasma membrane phospholipase A2 and its pore-forming activity. The sequence is that of Melittin (MELT) from Apis cerana cerana (Oriental honeybee).